The sequence spans 162 residues: MFHIVLVEPEIPPNTGNVIRLAANTGCMLHLVEPLGFSMEDPLMRRAGLDYHEYAEVRRHPGWTALLRDMQPDLSRMFALTTHGTQSVYDTGFLPGDWFVFGAESRGLPPELRETFPPAQRLRLPMLPNQRSLNLSNAVAVTVYEAWRQNSFLTPPTQPQPA.

Residues leucine 80, glycine 102, leucine 124, and serine 132 each coordinate S-adenosyl-L-methionine.

This sequence belongs to the class IV-like SAM-binding methyltransferase superfamily. RNA methyltransferase TrmH family. TrmL subfamily. Homodimer.

The protein resides in the cytoplasm. The enzyme catalyses cytidine(34) in tRNA + S-adenosyl-L-methionine = 2'-O-methylcytidine(34) in tRNA + S-adenosyl-L-homocysteine + H(+). It carries out the reaction 5-carboxymethylaminomethyluridine(34) in tRNA(Leu) + S-adenosyl-L-methionine = 5-carboxymethylaminomethyl-2'-O-methyluridine(34) in tRNA(Leu) + S-adenosyl-L-homocysteine + H(+). Methylates the ribose at the nucleotide 34 wobble position in the two leucyl isoacceptors tRNA(Leu)(CmAA) and tRNA(Leu)(cmnm5UmAA). Catalyzes the methyl transfer from S-adenosyl-L-methionine to the 2'-OH of the wobble nucleotide. The sequence is that of tRNA (cytidine(34)-2'-O)-methyltransferase from Acidovorax sp. (strain JS42).